Here is a 139-residue protein sequence, read N- to C-terminus: Small ribosomal subunit protein uS12 (139 aa).

Residues 1-21 (MSTVSQLIKKRRSSKTSKTKA) form a disordered region. Basic residues predominate over residues 8–18 (IKKRRSSKTSK). Aspartate 102 bears the 3-methylthioaspartic acid mark.

The protein belongs to the universal ribosomal protein uS12 family. Part of the 30S ribosomal subunit. Contacts proteins S8 and S17. May interact with IF1 in the 30S initiation complex.

Functionally, with S4 and S5 plays an important role in translational accuracy. In terms of biological role, interacts with and stabilizes bases of the 16S rRNA that are involved in tRNA selection in the A site and with the mRNA backbone. Located at the interface of the 30S and 50S subunits, it traverses the body of the 30S subunit contacting proteins on the other side and probably holding the rRNA structure together. The combined cluster of proteins S8, S12 and S17 appears to hold together the shoulder and platform of the 30S subunit. In Aster yellows witches'-broom phytoplasma (strain AYWB), this protein is Small ribosomal subunit protein uS12.